The primary structure comprises 206 residues: Small ribosomal subunit protein uS4 (206 aa).

The S4 RNA-binding domain occupies Gly-96–Lys-156.

The protein belongs to the universal ribosomal protein uS4 family. In terms of assembly, part of the 30S ribosomal subunit. Contacts protein S5. The interaction surface between S4 and S5 is involved in control of translational fidelity.

One of the primary rRNA binding proteins, it binds directly to 16S rRNA where it nucleates assembly of the body of the 30S subunit. Functionally, with S5 and S12 plays an important role in translational accuracy. This chain is Small ribosomal subunit protein uS4, found in Pectobacterium atrosepticum (strain SCRI 1043 / ATCC BAA-672) (Erwinia carotovora subsp. atroseptica).